Reading from the N-terminus, the 211-residue chain is Large ribosomal subunit protein uL4 (211 aa).

Residues 41-52 (QTNARQGTASTK) are compositionally biased toward polar residues. Residues 41 to 78 (QTNARQGTASTKTRAEVRGGGRKPWRQKGTGRARAGSI) are disordered. The span at 60-71 (GGRKPWRQKGTG) shows a compositional bias: basic residues.

Belongs to the universal ribosomal protein uL4 family. Part of the 50S ribosomal subunit.

One of the primary rRNA binding proteins, this protein initially binds near the 5'-end of the 23S rRNA. It is important during the early stages of 50S assembly. It makes multiple contacts with different domains of the 23S rRNA in the assembled 50S subunit and ribosome. Functionally, forms part of the polypeptide exit tunnel. The sequence is that of Large ribosomal subunit protein uL4 from Rippkaea orientalis (strain PCC 8801 / RF-1) (Cyanothece sp. (strain PCC 8801)).